Consider the following 425-residue polypeptide: Polyribonucleotide 5'-hydroxyl-kinase Clp1 (425 aa).

ATP-binding positions include glutamate 22, lysine 62, and 124–129; that span reads DVGKST.

The protein belongs to the Clp1 family. Clp1 subfamily. In terms of assembly, component of the tRNA splicing endonuclease complex. Component of pre-mRNA cleavage complex II (CF-II).

Its subcellular location is the nucleus. The enzyme catalyses a 5'-end dephospho-2'-deoxyribonucleoside-DNA + ATP = a 5'-end 5'-phospho-2'-deoxyribonucleoside-DNA + ADP + H(+). It catalyses the reaction a 5'-end dephospho-ribonucleoside-RNA + ATP = a 5'-end 5'-phospho-ribonucleoside-RNA + ADP + H(+). Polynucleotide kinase that can phosphorylate the 5'-hydroxyl groups of double-stranded RNA (dsRNA), single-stranded RNA (ssRNA), double stranded DNA (dsDNA) and double-stranded DNA:RNA hybrids. dsRNA is phosphorylated more efficiently than dsDNA, and the RNA component of a DNA:RNA hybrid is phosphorylated more efficiently than the DNA component. Plays a role in both tRNA splicing and mRNA 3'-end formation. Component of the tRNA splicing endonuclease complex: phosphorylates the 5'-terminus of the tRNA 3'-exon during tRNA splicing; this phosphorylation event is a prerequisite for the subsequent ligation of the two exon halves and the production of a mature tRNA. Its role in tRNA splicing and maturation is required for cerebellar development. Component of the pre-mRNA cleavage complex II (CF-II), which seems to be required for mRNA 3'-end formation. Also phosphorylates the 5'-terminus of exogenously introduced short interfering RNAs (siRNAs), which is a necessary prerequisite for their incorporation into the RNA-induced silencing complex (RISC). However, endogenous siRNAs and microRNAs (miRNAs) that are produced by the cleavage of dsRNA precursors by dicer1 already contain a 5'-phosphate group, so this protein may be dispensible for normal RNA-mediated gene silencing. The protein is Polyribonucleotide 5'-hydroxyl-kinase Clp1 of Gallus gallus (Chicken).